The following is a 426-amino-acid chain: UPF0229 protein Csal_0882 (426 aa).

Positions 82 to 93 (FVEGDRLRRPGG) are enriched in basic and acidic residues. Residues 82–109 (FVEGDRLRRPGGEGRGGSGEGSASNQGE) are disordered.

It belongs to the UPF0229 family.

In Chromohalobacter salexigens (strain ATCC BAA-138 / DSM 3043 / CIP 106854 / NCIMB 13768 / 1H11), this protein is UPF0229 protein Csal_0882.